Consider the following 208-residue polypeptide: Pyridoxine/pyridoxamine 5'-phosphate oxidase (208 aa).

FMN is bound by residues 55–60 (RMVLLK), 70–71 (YT), Lys-76, Lys-77, and Gln-99. Lys-60 contributes to the substrate binding site. The substrate site is built by Tyr-117, Arg-121, and Ser-125. FMN contacts are provided by residues 134 to 135 (QS) and Trp-179. Substrate is bound at residue 185–187 (RLH). Arg-189 contacts FMN.

Belongs to the pyridoxamine 5'-phosphate oxidase family. As to quaternary structure, homodimer. Requires FMN as cofactor.

It catalyses the reaction pyridoxamine 5'-phosphate + O2 + H2O = pyridoxal 5'-phosphate + H2O2 + NH4(+). The catalysed reaction is pyridoxine 5'-phosphate + O2 = pyridoxal 5'-phosphate + H2O2. Its pathway is cofactor metabolism; pyridoxal 5'-phosphate salvage; pyridoxal 5'-phosphate from pyridoxamine 5'-phosphate: step 1/1. The protein operates within cofactor metabolism; pyridoxal 5'-phosphate salvage; pyridoxal 5'-phosphate from pyridoxine 5'-phosphate: step 1/1. Catalyzes the oxidation of either pyridoxine 5'-phosphate (PNP) or pyridoxamine 5'-phosphate (PMP) into pyridoxal 5'-phosphate (PLP). This is Pyridoxine/pyridoxamine 5'-phosphate oxidase from Brucella abortus biovar 1 (strain 9-941).